The chain runs to 201 residues: Probable GTP-binding protein EngB (201 aa).

One can recognise an EngB-type G domain in the interval 22–197 (TFPEYAFIGR…LNYIESINKE (176 aa)). Residues 30-37 (GRSNVGKS), 57-61 (GKTML), 75-78 (DLPG), 142-145 (TKAD), and 175-178 (ITSS) contribute to the GTP site. Positions 37 and 59 each coordinate Mg(2+).

The protein belongs to the TRAFAC class TrmE-Era-EngA-EngB-Septin-like GTPase superfamily. EngB GTPase family. Mg(2+) serves as cofactor.

In terms of biological role, necessary for normal cell division and for the maintenance of normal septation. The polypeptide is Probable GTP-binding protein EngB (Bacteroides fragilis (strain ATCC 25285 / DSM 2151 / CCUG 4856 / JCM 11019 / LMG 10263 / NCTC 9343 / Onslow / VPI 2553 / EN-2)).